The following is a 357-amino-acid chain: Phosphoribosylformylglycinamidine cyclo-ligase (357 aa).

This sequence belongs to the AIR synthase family.

The protein resides in the cytoplasm. It catalyses the reaction 2-formamido-N(1)-(5-O-phospho-beta-D-ribosyl)acetamidine + ATP = 5-amino-1-(5-phospho-beta-D-ribosyl)imidazole + ADP + phosphate + H(+). It functions in the pathway purine metabolism; IMP biosynthesis via de novo pathway; 5-amino-1-(5-phospho-D-ribosyl)imidazole from N(2)-formyl-N(1)-(5-phospho-D-ribosyl)glycinamide: step 2/2. The chain is Phosphoribosylformylglycinamidine cyclo-ligase from Agrobacterium fabrum (strain C58 / ATCC 33970) (Agrobacterium tumefaciens (strain C58)).